A 147-amino-acid polypeptide reads, in one-letter code: 3-dehydroquinate dehydratase (147 aa).

Tyr23 (proton acceptor) is an active-site residue. Asn74, His80, and Asp87 together coordinate substrate. The Proton donor role is filled by His100. Substrate contacts are provided by residues 101-102 and Arg111; that span reads LS.

The protein belongs to the type-II 3-dehydroquinase family. As to quaternary structure, homododecamer.

The catalysed reaction is 3-dehydroquinate = 3-dehydroshikimate + H2O. It functions in the pathway metabolic intermediate biosynthesis; chorismate biosynthesis; chorismate from D-erythrose 4-phosphate and phosphoenolpyruvate: step 3/7. Functionally, catalyzes a trans-dehydration via an enolate intermediate. This is 3-dehydroquinate dehydratase from Clostridium botulinum (strain ATCC 19397 / Type A).